Here is a 266-residue protein sequence, read N- to C-terminus: Blue copper protein (266 aa).

An N-terminal signal peptide occupies residues Met-1–Ala-24. Phytocyanin domains follow at residues Thr-25–Leu-56, Ala-57–Asp-102, and Thr-116–Gly-216. A glycan (N-linked (GlcNAc...) asparagine) is linked at Asn-47. His-156 contributes to the Cu cation binding site. The N-linked (GlcNAc...) asparagine glycan is linked to Asn-162. Cys-169 and Cys-203 are disulfide-bonded. Positions 197, 202, and 208 each coordinate Cu cation. The helical transmembrane segment at Ile-245–Leu-265 threads the bilayer.

It is found in the membrane. The polypeptide is Blue copper protein (Petunia hybrida (Petunia)).